Consider the following 378-residue polypeptide: Cytochrome b (378 aa).

A run of 4 helical transmembrane segments spans residues 34 to 54 (FGSLLGLCLIIQILTGLFLAM), 78 to 99 (WLLRTLHANGASFFFICIYLHV), 114 to 134 (WLIGVIILFLVMGTAFMGYVL), and 179 to 199 (FFTFHFILPFIVLAMTMIHLL). 2 residues coordinate heme b: His-84 and His-98. Residues His-183 and His-197 each coordinate heme b. His-202 serves as a coordination point for a ubiquinone. Transmembrane regions (helical) follow at residues 227-247 (FKDIVGFIVMIFILISLVLIS), 289-309 (LGGVIALVLSIAILMILPFYN), 321-341 (INQVMFWSMLVTVILLTWIGA), and 348-368 (YVLIGQILTVVYFLYYLVNPL).

Belongs to the cytochrome b family. The main subunits of complex b-c1 are: cytochrome b, cytochrome c1 and the Rieske protein. Requires heme b as cofactor.

It is found in the mitochondrion inner membrane. Functionally, component of the ubiquinol-cytochrome c reductase complex (complex III or cytochrome b-c1 complex) that is part of the mitochondrial respiratory chain. The b-c1 complex mediates electron transfer from ubiquinol to cytochrome c. Contributes to the generation of a proton gradient across the mitochondrial membrane that is then used for ATP synthesis. In Drosophila melanogaster (Fruit fly), this protein is Cytochrome b (mt:Cyt-b).